A 421-amino-acid chain; its full sequence is UDP-N-acetylglucosamine 1-carboxyvinyltransferase 1 (421 aa).

Residue 22 to 23 (KN) coordinates phosphoenolpyruvate. Arginine 95 provides a ligand contact to UDP-N-acetyl-alpha-D-glucosamine. Cysteine 119 functions as the Proton donor in the catalytic mechanism. Cysteine 119 carries the post-translational modification 2-(S-cysteinyl)pyruvic acid O-phosphothioketal. Residues 124–128 (RPIEQ), aspartate 308, and valine 330 each bind UDP-N-acetyl-alpha-D-glucosamine.

This sequence belongs to the EPSP synthase family. MurA subfamily.

The protein localises to the cytoplasm. The catalysed reaction is phosphoenolpyruvate + UDP-N-acetyl-alpha-D-glucosamine = UDP-N-acetyl-3-O-(1-carboxyvinyl)-alpha-D-glucosamine + phosphate. Its pathway is cell wall biogenesis; peptidoglycan biosynthesis. In terms of biological role, cell wall formation. Adds enolpyruvyl to UDP-N-acetylglucosamine. The polypeptide is UDP-N-acetylglucosamine 1-carboxyvinyltransferase 1 (Staphylococcus aureus (strain bovine RF122 / ET3-1)).